Here is a 513-residue protein sequence, read N- to C-terminus: Pantetheinase (513 aa).

Positions 1–22 are cleaved as a signal peptide; it reads MITSPLLAYVAILFFCVLKASS. A CN hydrolase domain is found at 40–307; sequence APLTPVSHEE…GKLLLSQLDS (268 aa). Catalysis depends on glutamate 80, which acts as the Proton acceptor. N-linked (GlcNAc...) asparagine glycosylation is present at asparagine 147. Lysine 179 acts as the Proton donor in catalysis. Cysteine 212 functions as the Nucleophile in the catalytic mechanism. N-linked (GlcNAc...) asparagine glycans are attached at residues asparagine 315 and asparagine 353. Residue glycine 487 is the site of GPI-anchor amidated glycine attachment. The propeptide at 488 to 513 is removed in mature form; sequence ASADLVAQGLRVMLGVIITIMYSLSW.

The protein belongs to the carbon-nitrogen hydrolase superfamily. BTD/VNN family. Monomer. In terms of tissue distribution, detected in kidney (at protein level).

Its subcellular location is the cell membrane. It carries out the reaction (R)-pantetheine + H2O = cysteamine + (R)-pantothenate. Functionally, amidohydrolase that hydrolyzes specifically one of the carboamide linkages in D-pantetheine thus recycling pantothenic acid (vitamin B5) and releasing cysteamine. The sequence is that of Pantetheinase (VNN1) from Sus scrofa (Pig).